A 247-amino-acid polypeptide reads, in one-letter code: 4-hydroxy-tetrahydrodipicolinate reductase (247 aa).

NAD(+) is bound by residues 12-17 (GITGRM), 78-80 (GTT), and 102-105 (AANF). His-136 acts as the Proton donor/acceptor in catalysis. His-137 lines the (S)-2,3,4,5-tetrahydrodipicolinate pocket. Residue Lys-140 is the Proton donor of the active site. 146 to 147 (GT) provides a ligand contact to (S)-2,3,4,5-tetrahydrodipicolinate.

It belongs to the DapB family.

Its subcellular location is the cytoplasm. The enzyme catalyses (S)-2,3,4,5-tetrahydrodipicolinate + NAD(+) + H2O = (2S,4S)-4-hydroxy-2,3,4,5-tetrahydrodipicolinate + NADH + H(+). It catalyses the reaction (S)-2,3,4,5-tetrahydrodipicolinate + NADP(+) + H2O = (2S,4S)-4-hydroxy-2,3,4,5-tetrahydrodipicolinate + NADPH + H(+). The protein operates within amino-acid biosynthesis; L-lysine biosynthesis via DAP pathway; (S)-tetrahydrodipicolinate from L-aspartate: step 4/4. Its function is as follows. Catalyzes the conversion of 4-hydroxy-tetrahydrodipicolinate (HTPA) to tetrahydrodipicolinate. The sequence is that of 4-hydroxy-tetrahydrodipicolinate reductase from Acidiphilium cryptum (strain JF-5).